A 104-amino-acid chain; its full sequence is Protein P3 (104 aa).

A helical transmembrane segment spans residues 77–99 (LVFGVPQKTLLLGFGGLLVLGLV).

In terms of assembly, homodimer.

Its subcellular location is the virion membrane. In Pseudoalteromonas phage PM2 (Bacteriophage PM2), this protein is Protein P3 (III).